A 182-amino-acid chain; its full sequence is Putative manganese efflux pump MntP (182 aa).

A run of 6 helical transmembrane segments spans residues 6 to 26 (LIPL…VSLG), 37 to 57 (ILYI…IGMV), 71 to 91 (HFAG…STIL), 101 to 121 (IGIS…SVGL), 131 to 151 (IITI…GLLI), and 162 to 182 (YGEI…LFPI).

This sequence belongs to the MntP (TC 9.B.29) family.

The protein resides in the cell membrane. Its function is as follows. Probably functions as a manganese efflux pump. This chain is Putative manganese efflux pump MntP, found in Bacillus cereus (strain B4264).